A 379-amino-acid chain; its full sequence is All-trans-retinol dehydrogenase [NAD(+)] ADH4 (379 aa).

At Thr1 the chain carries N-acetylthreonine. Residues Cys46, His68, Cys98, Cys101, Cys104, Cys112, and Cys179 each coordinate Zn(2+). NAD(+) contacts are provided by residues 204 to 209, Asp228, Lys233, 297 to 299, and Arg374; these read GLGGVG and VGV.

It belongs to the zinc-containing alcohol dehydrogenase family. Class-II subfamily. As to quaternary structure, homodimer. Zn(2+) serves as cofactor.

The protein localises to the cytoplasm. It catalyses the reaction all-trans-retinol + NAD(+) = all-trans-retinal + NADH + H(+). The enzyme catalyses 9-cis-retinol + NAD(+) = 9-cis-retinal + NADH + H(+). The catalysed reaction is 20-oxo-(5Z,8Z,11Z,14Z)-eicosatetraenoate + NAD(+) + H2O = (5Z,8Z,11Z,14Z)-eicosatetraenedioate + NADH + 2 H(+). It carries out the reaction 20-hydroxy-(5Z,8Z,11Z,14Z)-eicosatetraenoate + NAD(+) = 20-oxo-(5Z,8Z,11Z,14Z)-eicosatetraenoate + NADH + H(+). It catalyses the reaction 1,4-benzoquinone + NADH + H(+) = hydroquinone + NAD(+). Oxidation of 20-HETE is inhibited by low concentrations of N-heptylformamide. Oxidation of 20-HETE is a decreased by 55-65% by either all-trans-retinol or all-trans-retinoic acid. Strongly inhibited by omega-hydroxy fatty acids. Its function is as follows. Catalyzes the NAD-dependent oxidation of either all-trans-retinol or 9-cis-retinol. Also oxidizes long chain omega-hydroxy fatty acids, such as 20-HETE, producing both the intermediate aldehyde, 20-oxoarachidonate and the end product, a dicarboxylic acid, (5Z,8Z,11Z,14Z)-eicosatetraenedioate. Also catalyzes the reduction of benzoquinones. This is All-trans-retinol dehydrogenase [NAD(+)] ADH4 from Struthio camelus (Common ostrich).